The following is a 321-amino-acid chain: S-methyl-5'-thioadenosine phosphorylase (321 aa).

Phosphate is bound by residues Thr30, 73–74 (RH), and 106–107 (SA). Met215 lines the substrate pocket. Residue Ser216 participates in phosphate binding. 239–241 (DYD) lines the substrate pocket.

It belongs to the PNP/MTAP phosphorylase family. MTAP subfamily. Homotrimer.

The protein localises to the cytoplasm. Its subcellular location is the nucleus. The enzyme catalyses S-methyl-5'-thioadenosine + phosphate = 5-(methylsulfanyl)-alpha-D-ribose 1-phosphate + adenine. It functions in the pathway amino-acid biosynthesis; L-methionine biosynthesis via salvage pathway; S-methyl-5-thio-alpha-D-ribose 1-phosphate from S-methyl-5'-thioadenosine (phosphorylase route): step 1/1. Functionally, catalyzes the reversible phosphorylation of S-methyl-5'-thioadenosine (MTA) to adenine and 5-methylthioribose-1-phosphate. Involved in the breakdown of MTA, a major by-product of polyamine biosynthesis. Responsible for the first step in the methionine salvage pathway after MTA has been generated from S-adenosylmethionine. Has broad substrate specificity with 6-aminopurine nucleosides as preferred substrates. The sequence is that of S-methyl-5'-thioadenosine phosphorylase from Yarrowia lipolytica (strain CLIB 122 / E 150) (Yeast).